The primary structure comprises 215 residues: Outer-membrane lipoprotein LolB (215 aa).

Positions 1–21 are cleaved as a signal peptide; the sequence is MLIPKKYYLLIILLSNCLLAS. Cys22 is lipidated: N-palmitoyl cysteine. The S-diacylglycerol cysteine moiety is linked to residue Cys22.

This sequence belongs to the LolB family. In terms of assembly, monomer.

It is found in the cell outer membrane. Its function is as follows. Plays a critical role in the incorporation of lipoproteins in the outer membrane after they are released by the LolA protein. This is Outer-membrane lipoprotein LolB from Baumannia cicadellinicola subsp. Homalodisca coagulata.